The following is a 505-amino-acid chain: Glycerol kinase (505 aa).

Thr13 contacts ADP. Residues Thr13, Thr14, and Ser15 each coordinate ATP. Position 13 (Thr13) interacts with sn-glycerol 3-phosphate. Arg17 serves as a coordination point for ADP. Arg83, Glu84, Tyr135, and Asp247 together coordinate sn-glycerol 3-phosphate. Residues Arg83, Glu84, Tyr135, Asp247, and Gln248 each contribute to the glycerol site. Positions 269 and 313 each coordinate ADP. Thr269, Gly313, Gln317, and Gly414 together coordinate ATP. ADP contacts are provided by Gly414 and Asn418.

This sequence belongs to the FGGY kinase family.

It carries out the reaction glycerol + ATP = sn-glycerol 3-phosphate + ADP + H(+). It participates in polyol metabolism; glycerol degradation via glycerol kinase pathway; sn-glycerol 3-phosphate from glycerol: step 1/1. Inhibited by fructose 1,6-bisphosphate (FBP). Key enzyme in the regulation of glycerol uptake and metabolism. Catalyzes the phosphorylation of glycerol to yield sn-glycerol 3-phosphate. In Clavibacter michiganensis subsp. michiganensis (strain NCPPB 382), this protein is Glycerol kinase.